The primary structure comprises 376 residues: Succinyl-diaminopimelate desuccinylase (376 aa).

Residue H64 participates in Zn(2+) binding. D66 is an active-site residue. Position 97 (D97) interacts with Zn(2+). E131 functions as the Proton acceptor in the catalytic mechanism. Residues E132, E160, and H347 each coordinate Zn(2+).

Belongs to the peptidase M20A family. DapE subfamily. Homodimer. Zn(2+) serves as cofactor. Co(2+) is required as a cofactor.

It catalyses the reaction N-succinyl-(2S,6S)-2,6-diaminopimelate + H2O = (2S,6S)-2,6-diaminopimelate + succinate. It functions in the pathway amino-acid biosynthesis; L-lysine biosynthesis via DAP pathway; LL-2,6-diaminopimelate from (S)-tetrahydrodipicolinate (succinylase route): step 3/3. In terms of biological role, catalyzes the hydrolysis of N-succinyl-L,L-diaminopimelic acid (SDAP), forming succinate and LL-2,6-diaminopimelate (DAP), an intermediate involved in the bacterial biosynthesis of lysine and meso-diaminopimelic acid, an essential component of bacterial cell walls. The chain is Succinyl-diaminopimelate desuccinylase from Wigglesworthia glossinidia brevipalpis.